Here is a 165-residue protein sequence, read N- to C-terminus: MIIKGKIWKFKDNIDTDQIIPARYLNTSDPLELASHVMEDSEKPNFAKEHQEGDIIVAGKNFGSGSSREHAPIAIKYAGVPVVVAKSFARIFFRNAINIGLPIVECKEAVDEAEDGDIFEIDLENGIVKNVTKNKTYSSTKFPEELMAILRAGGLMEYAKSRLSS.

This sequence belongs to the LeuD family. LeuD type 2 subfamily. Heterodimer of LeuC and LeuD.

The enzyme catalyses (2R,3S)-3-isopropylmalate = (2S)-2-isopropylmalate. Its pathway is amino-acid biosynthesis; L-leucine biosynthesis; L-leucine from 3-methyl-2-oxobutanoate: step 2/4. In terms of biological role, catalyzes the isomerization between 2-isopropylmalate and 3-isopropylmalate, via the formation of 2-isopropylmaleate. In Hydrogenobaculum sp. (strain Y04AAS1), this protein is 3-isopropylmalate dehydratase small subunit.